The sequence spans 425 residues: Serine--tRNA ligase (425 aa).

231–233 (TAE) is a binding site for L-serine. 262-264 (RSE) provides a ligand contact to ATP. E285 serves as a coordination point for L-serine. 349-352 (EISS) serves as a coordination point for ATP. S385 is an L-serine binding site.

This sequence belongs to the class-II aminoacyl-tRNA synthetase family. Type-1 seryl-tRNA synthetase subfamily. As to quaternary structure, homodimer. The tRNA molecule binds across the dimer.

Its subcellular location is the cytoplasm. It carries out the reaction tRNA(Ser) + L-serine + ATP = L-seryl-tRNA(Ser) + AMP + diphosphate + H(+). It catalyses the reaction tRNA(Sec) + L-serine + ATP = L-seryl-tRNA(Sec) + AMP + diphosphate + H(+). The protein operates within aminoacyl-tRNA biosynthesis; selenocysteinyl-tRNA(Sec) biosynthesis; L-seryl-tRNA(Sec) from L-serine and tRNA(Sec): step 1/1. Catalyzes the attachment of serine to tRNA(Ser). Is also able to aminoacylate tRNA(Sec) with serine, to form the misacylated tRNA L-seryl-tRNA(Sec), which will be further converted into selenocysteinyl-tRNA(Sec). This Maricaulis maris (strain MCS10) (Caulobacter maris) protein is Serine--tRNA ligase.